A 254-amino-acid polypeptide reads, in one-letter code: Sensory transduction protein LytR (254 aa).

Positions 2–116 (RAIIVDDEPL…RIAQAVHKVE (115 aa)) constitute a Response regulatory domain. Asp-53 carries the 4-aspartylphosphate modification. A disordered region spans residues 120–143 (GQTTEHHSDSYTTASMDTQNNEKT). Residues 129–138 (SYTTASMDTQ) are compositionally biased toward polar residues. The HTH LytTR-type domain maps to 149–253 (LPIEVNERIH…MKTFKQMMGL (105 aa)).

In terms of processing, phosphorylated by LytS.

The protein resides in the cytoplasm. Its function is as follows. Member of the two-component regulatory system LytR/LytS that probably regulates genes involved in cell wall metabolism. In Staphylococcus saprophyticus subsp. saprophyticus (strain ATCC 15305 / DSM 20229 / NCIMB 8711 / NCTC 7292 / S-41), this protein is Sensory transduction protein LytR (lytR).